Here is a 669-residue protein sequence, read N- to C-terminus: Cysteine-rich receptor-like protein kinase 34 (669 aa).

Positions 1–23 are cleaved as a signal peptide; that stretch reads MKLKISFLPTFLIFLISLDSVTA. Gnk2-homologous domains are found at residues 24–123 and 133–246; these read QEIC…NVSF and ETLY…LYPY. The Extracellular portion of the chain corresponds to 24 to 285; the sequence is QEICFSGFFK…SDRANTTIKG (262 aa). Residues Asn35, Asn52, Asn103, Asn120, Asn147, Asn172, Asn252, and Asn280 are each glycosylated (N-linked (GlcNAc...) asparagine). A helical membrane pass occupies residues 286–306; it reads IIVAIVVPIIVILVSLVVLLV. The Cytoplasmic segment spans residues 307-669; the sequence is VCRRKKSYKT…DASITEFYPR (363 aa). Positions 345 to 624 constitute a Protein kinase domain; that stretch reads FSDSNMIGRG…MMLTSSTTTL (280 aa). ATP contacts are provided by residues 351–359 and Lys373; that span reads IGRGGFGEV. Phosphotyrosine is present on Tyr418. Asp470 serves as the catalytic Proton acceptor. Position 474 is a phosphoserine (Ser474). Thr510 bears the Phosphothreonine mark. Phosphotyrosine is present on Tyr518.

Belongs to the protein kinase superfamily. Ser/Thr protein kinase family. CRK subfamily.

The protein resides in the membrane. The catalysed reaction is L-seryl-[protein] + ATP = O-phospho-L-seryl-[protein] + ADP + H(+). The enzyme catalyses L-threonyl-[protein] + ATP = O-phospho-L-threonyl-[protein] + ADP + H(+). This Arabidopsis thaliana (Mouse-ear cress) protein is Cysteine-rich receptor-like protein kinase 34.